The chain runs to 473 residues: Serine palmitoyltransferase 1 (473 aa).

Over 1-15 (MATVAEQWVLVEMVQ) the chain is Lumenal. The tract at residues 1–66 (MATVAEQWVL…KEELIEEWQP (66 aa)) is interaction with SPTLC2. Residues 16 to 36 (ALYEAPAYHLILEGILILWII) form a helical membrane-spanning segment. Topologically, residues 37-473 (RLLFSKTYKL…ISEVAQTVLL (437 aa)) are cytoplasmic. Residue Y164 is modified to Phosphotyrosine; by ABL.

It belongs to the class-II pyridoxal-phosphate-dependent aminotransferase family. In terms of assembly, component of the serine palmitoyltransferase (SPT) complex, which is also composed of SPTLC2 or SPTLC3 and SPTSSA or SPTSSB. The heterodimer with SPTLC2 or SPTLC3 forms the catalytic core of the enzyme, while SPTSSA or SPTSSB subunits determine substrate specificity. SPT also interacts with ORMDL proteins, especially ORMDL3, which negatively regulate SPT activity in the presence of ceramides. Forms dimers of heterodimers with SPTLC2. Interacts with RTN4. Pyridoxal 5'-phosphate serves as cofactor. Phosphorylation at Tyr-164 inhibits activity and promotes cell survival.

The protein resides in the endoplasmic reticulum membrane. It catalyses the reaction L-serine + hexadecanoyl-CoA + H(+) = 3-oxosphinganine + CO2 + CoA. The catalysed reaction is octadecanoyl-CoA + L-serine + H(+) = 3-oxoeicosasphinganine + CO2 + CoA. The enzyme catalyses tetradecanoyl-CoA + L-serine + H(+) = 3-oxohexadecasphinganine + CO2 + CoA. It carries out the reaction dodecanoyl-CoA + L-serine + H(+) = 3-oxotetradecasphinganine + CO2 + CoA. Its pathway is lipid metabolism; sphingolipid metabolism. With respect to regulation, SPT complex catalytic activity is negatively regulated by ORMDL proteins, including ORMDL3, in the presence of ceramides. This mechanism allows to maintain ceramide levels at sufficient concentrations for the production of complex sphingolipids, but which prevents the accumulation of ceramides to levels that trigger apoptosis. Component of the serine palmitoyltransferase multisubunit enzyme (SPT) that catalyzes the initial and rate-limiting step in sphingolipid biosynthesis by condensing L-serine and activated acyl-CoA (most commonly palmitoyl-CoA) to form long-chain bases. The SPT complex is also composed of SPTLC2 or SPTLC3 and SPTSSA or SPTSSB. Within this complex, the heterodimer with SPTLC2 or SPTLC3 forms the catalytic core. The composition of the serine palmitoyltransferase (SPT) complex determines the substrate preference. The SPTLC1-SPTLC2-SPTSSA complex shows a strong preference for C16-CoA substrate, while the SPTLC1-SPTLC3-SPTSSA isozyme uses both C14-CoA and C16-CoA as substrates, with a slight preference for C14-CoA. The SPTLC1-SPTLC2-SPTSSB complex shows a strong preference for C18-CoA substrate, while the SPTLC1-SPTLC3-SPTSSB isozyme displays an ability to use a broader range of acyl-CoAs, without apparent preference. Required for adipocyte cell viability and metabolic homeostasis. This chain is Serine palmitoyltransferase 1 (SPTLC1), found in Bos taurus (Bovine).